An 88-amino-acid chain; its full sequence is Small ribosomal subunit protein uS15 (88 aa).

It belongs to the universal ribosomal protein uS15 family. As to quaternary structure, part of the 30S ribosomal subunit. Forms a bridge to the 50S subunit in the 70S ribosome, contacting the 23S rRNA.

In terms of biological role, one of the primary rRNA binding proteins, it binds directly to 16S rRNA where it helps nucleate assembly of the platform of the 30S subunit by binding and bridging several RNA helices of the 16S rRNA. Forms an intersubunit bridge (bridge B4) with the 23S rRNA of the 50S subunit in the ribosome. The polypeptide is Small ribosomal subunit protein uS15 (Opitutus terrae (strain DSM 11246 / JCM 15787 / PB90-1)).